The chain runs to 424 residues: CinA-like protein (424 aa).

Belongs to the CinA family.

The chain is CinA-like protein from Prochlorococcus marinus (strain MIT 9215).